The sequence spans 157 residues: 2-C-methyl-D-erythritol 2,4-cyclodiphosphate synthase (157 aa).

Positions 9 and 11 each coordinate a divalent metal cation. Residues 9 to 11 and 35 to 36 contribute to the 4-CDP-2-C-methyl-D-erythritol 2-phosphate site; these read DVH and HS. Histidine 43 is a binding site for a divalent metal cation. Residues 57–59, 62–66, 101–107, 133–136, phenylalanine 140, and arginine 143 contribute to the 4-CDP-2-C-methyl-D-erythritol 2-phosphate site; these read DIG, FPDTD, AQKPKMA, and TTTE.

It belongs to the IspF family. Homotrimer. Requires a divalent metal cation as cofactor.

The catalysed reaction is 4-CDP-2-C-methyl-D-erythritol 2-phosphate = 2-C-methyl-D-erythritol 2,4-cyclic diphosphate + CMP. The protein operates within isoprenoid biosynthesis; isopentenyl diphosphate biosynthesis via DXP pathway; isopentenyl diphosphate from 1-deoxy-D-xylulose 5-phosphate: step 4/6. In terms of biological role, involved in the biosynthesis of isopentenyl diphosphate (IPP) and dimethylallyl diphosphate (DMAPP), two major building blocks of isoprenoid compounds. Catalyzes the conversion of 4-diphosphocytidyl-2-C-methyl-D-erythritol 2-phosphate (CDP-ME2P) to 2-C-methyl-D-erythritol 2,4-cyclodiphosphate (ME-CPP) with a corresponding release of cytidine 5-monophosphate (CMP). The protein is 2-C-methyl-D-erythritol 2,4-cyclodiphosphate synthase of Halalkalibacterium halodurans (strain ATCC BAA-125 / DSM 18197 / FERM 7344 / JCM 9153 / C-125) (Bacillus halodurans).